A 408-amino-acid polypeptide reads, in one-letter code: GPI transamidase component GAB1 homolog (408 aa).

10 helical membrane passes run 9–29 (LLGL…TWIA), 66–86 (VFYQ…LGGI), 88–108 (VTRF…YLIA), 125–145 (PLWI…GIAC), 149–169 (MILN…SYAI), 207–227 (IFVV…FFLN), 266–286 (FFLF…SIRL), 303–323 (LFKA…LPIF), 339–359 (AIVF…TLGC), and 370–390 (LILA…LLLV). The interval 247-267 (PNLGLWWYFFTEMFNEFRTFF) is may be involved in recognition of long-chain fatty acids in GPI.

Belongs to the PIGU family. Forms a complex with PIG-S homolog, PIG-T homolog and GPI8.

Its subcellular location is the endoplasmic reticulum membrane. It participates in glycolipid biosynthesis; glycosylphosphatidylinositol-anchor biosynthesis. Its function is as follows. Component of the GPI transamidase complex. May be involved in the recognition of either the GPI attachment signal or the lipid portion of GPI. In Schizosaccharomyces pombe (strain 972 / ATCC 24843) (Fission yeast), this protein is GPI transamidase component GAB1 homolog.